Consider the following 337-residue polypeptide: 4-hydroxythreonine-4-phosphate dehydrogenase (337 aa).

Residues histidine 138 and threonine 139 each contribute to the substrate site. Residues histidine 168, histidine 212, and histidine 267 each contribute to the a divalent metal cation site. The substrate site is built by lysine 275, asparagine 284, and arginine 293.

The protein belongs to the PdxA family. Homodimer. Zn(2+) serves as cofactor. Requires Mg(2+) as cofactor. It depends on Co(2+) as a cofactor.

The protein localises to the cytoplasm. The enzyme catalyses 4-(phosphooxy)-L-threonine + NAD(+) = 3-amino-2-oxopropyl phosphate + CO2 + NADH. Its pathway is cofactor biosynthesis; pyridoxine 5'-phosphate biosynthesis; pyridoxine 5'-phosphate from D-erythrose 4-phosphate: step 4/5. In terms of biological role, catalyzes the NAD(P)-dependent oxidation of 4-(phosphooxy)-L-threonine (HTP) into 2-amino-3-oxo-4-(phosphooxy)butyric acid which spontaneously decarboxylates to form 3-amino-2-oxopropyl phosphate (AHAP). This Beijerinckia indica subsp. indica (strain ATCC 9039 / DSM 1715 / NCIMB 8712) protein is 4-hydroxythreonine-4-phosphate dehydrogenase.